The sequence spans 132 residues: DNA-directed RNA polymerase subunit omega (132 aa).

A disordered region spans residues 100 to 119 (VSAEEEASHGTAGMSAEELE).

Belongs to the RNA polymerase subunit omega family. In terms of assembly, the RNAP catalytic core consists of 2 alpha, 1 beta, 1 beta' and 1 omega subunit. When a sigma factor is associated with the core the holoenzyme is formed, which can initiate transcription.

It carries out the reaction RNA(n) + a ribonucleoside 5'-triphosphate = RNA(n+1) + diphosphate. Its function is as follows. Promotes RNA polymerase assembly. Latches the N- and C-terminal regions of the beta' subunit thereby facilitating its interaction with the beta and alpha subunits. The sequence is that of DNA-directed RNA polymerase subunit omega from Gluconacetobacter diazotrophicus (strain ATCC 49037 / DSM 5601 / CCUG 37298 / CIP 103539 / LMG 7603 / PAl5).